We begin with the raw amino-acid sequence, 545 residues long: Chaperonin GroEL (545 aa).

Residues 29–32 (TLGP), K50, 86–90 (DGTTT), G415, and D495 each bind ATP.

The protein belongs to the chaperonin (HSP60) family. As to quaternary structure, forms a cylinder of 14 subunits composed of two heptameric rings stacked back-to-back. Interacts with the co-chaperonin GroES.

Its subcellular location is the cytoplasm. The catalysed reaction is ATP + H2O + a folded polypeptide = ADP + phosphate + an unfolded polypeptide.. Functionally, together with its co-chaperonin GroES, plays an essential role in assisting protein folding. The GroEL-GroES system forms a nano-cage that allows encapsulation of the non-native substrate proteins and provides a physical environment optimized to promote and accelerate protein folding. The chain is Chaperonin GroEL from Porphyromonas gingivalis (strain ATCC 33277 / DSM 20709 / CIP 103683 / JCM 12257 / NCTC 11834 / 2561).